A 78-amino-acid chain; its full sequence is MKTSGRLLFLCLAVGLLLESQAHPIADAEDATRNVGSDGTSVELSEILERGQDSSAEKGQRQNDHDVDESGHDIPFPS.

The signal sequence occupies residues 1–22 (MKTSGRLLFLCLAVGLLLESQA). Residues 23-61 (HPIADAEDATRNVGSDGTSVELSEILERGQDSSAEKGQR) constitute a propeptide that is removed on maturation. The segment at 25–78 (IADAEDATRNVGSDGTSVELSEILERGQDSSAEKGQRQNDHDVDESGHDIPFPS) is disordered. Positions 34–43 (NVGSDGTSVE) are enriched in polar residues. Basic and acidic residues predominate over residues 47–72 (ILERGQDSSAEKGQRQNDHDVDESGH). Gln-62 carries the post-translational modification Pyrrolidone carboxylic acid.

It belongs to the conotoxin H superfamily. As to expression, expressed by the venom duct.

Its subcellular location is the secreted. Functionally, probable toxin. The chain is Conotoxin ba1890.8 from Conus bayani (Bayan's cone).